Reading from the N-terminus, the 740-residue chain is Ion-translocating oxidoreductase complex subunit C (740 aa).

4Fe-4S ferredoxin-type domains lie at 369–397 (GEPQ…QQLY) and 407–436 (KATT…VQYF). Residues C377, C380, C383, C387, C416, C419, C422, and C426 each contribute to the [4Fe-4S] cluster site. 2 disordered regions span residues 571-590 (LEQQ…RKAA) and 602-716 (KLEQ…DPRK). 2 stretches are compositionally biased toward low complexity: residues 573–583 (QQQANAEPEQQ) and 637–647 (QQQANAEPEQQ).

It belongs to the 4Fe4S bacterial-type ferredoxin family. RnfC subfamily. The complex is composed of six subunits: RsxA, RsxB, RsxC, RsxD, RsxE and RsxG. Requires [4Fe-4S] cluster as cofactor.

The protein localises to the cell inner membrane. Part of a membrane-bound complex that couples electron transfer with translocation of ions across the membrane. Required to maintain the reduced state of SoxR. Probably transfers electron from NAD(P)H to SoxR. This is Ion-translocating oxidoreductase complex subunit C from Escherichia coli (strain K12).